Consider the following 301-residue polypeptide: UDP-N-acetylenolpyruvoylglucosamine reductase (301 aa).

An FAD-binding PCMH-type domain is found at 27–194 (RVGGPADVVF…LDAIFEGTPD (168 aa)). R172 is a catalytic residue. Residue S223 is the Proton donor of the active site. E293 is a catalytic residue.

It belongs to the MurB family. FAD serves as cofactor.

It is found in the cytoplasm. It catalyses the reaction UDP-N-acetyl-alpha-D-muramate + NADP(+) = UDP-N-acetyl-3-O-(1-carboxyvinyl)-alpha-D-glucosamine + NADPH + H(+). It functions in the pathway cell wall biogenesis; peptidoglycan biosynthesis. Its function is as follows. Cell wall formation. This is UDP-N-acetylenolpyruvoylglucosamine reductase from Caulobacter vibrioides (strain NA1000 / CB15N) (Caulobacter crescentus).